The sequence spans 197 residues: Peptide deformylase (197 aa).

Fe cation-binding residues include cysteine 106 and histidine 148. Glutamate 149 is an active-site residue. Histidine 152 provides a ligand contact to Fe cation.

Belongs to the polypeptide deformylase family. Fe(2+) serves as cofactor.

It carries out the reaction N-terminal N-formyl-L-methionyl-[peptide] + H2O = N-terminal L-methionyl-[peptide] + formate. In terms of biological role, removes the formyl group from the N-terminal Met of newly synthesized proteins. Requires at least a dipeptide for an efficient rate of reaction. N-terminal L-methionine is a prerequisite for activity but the enzyme has broad specificity at other positions. The sequence is that of Peptide deformylase from Mycobacteroides abscessus (strain ATCC 19977 / DSM 44196 / CCUG 20993 / CIP 104536 / JCM 13569 / NCTC 13031 / TMC 1543 / L948) (Mycobacterium abscessus).